Here is a 468-residue protein sequence, read N- to C-terminus: 3-isopropylmalate dehydratase large subunit (468 aa).

Residues cysteine 347, cysteine 407, and cysteine 410 each coordinate [4Fe-4S] cluster.

Belongs to the aconitase/IPM isomerase family. LeuC type 1 subfamily. In terms of assembly, heterodimer of LeuC and LeuD. Requires [4Fe-4S] cluster as cofactor.

It catalyses the reaction (2R,3S)-3-isopropylmalate = (2S)-2-isopropylmalate. It participates in amino-acid biosynthesis; L-leucine biosynthesis; L-leucine from 3-methyl-2-oxobutanoate: step 2/4. Catalyzes the isomerization between 2-isopropylmalate and 3-isopropylmalate, via the formation of 2-isopropylmaleate. This chain is 3-isopropylmalate dehydratase large subunit, found in Glaesserella parasuis serovar 5 (strain SH0165) (Haemophilus parasuis).